A 337-amino-acid polypeptide reads, in one-letter code: Heme A synthase (337 aa).

7 consecutive transmembrane segments (helical) span residues 3–23 (LARWLWVVAGLVVTIVAIGGI), 94–114 (VIGLAFLLPMMWFWIRGMIPA), 120–140 (LLALFALICGQGALGWYMVAS), 154–174 (LSAHLLTALFLLAGLVWTALD), 191–211 (GVAWMASIILFIQILLGAWVA), 248–268 (FLLHFLHRWWAWVAVIALVVL), and 289–309 (TMVVLGIATVLSEVSLWIAVA). Heme is bound at residue H254. Heme is bound at residue H310. The chain crosses the membrane as a helical span at residues 311–331 (QLTGALLVISTAWAAHAIGTA).

The protein belongs to the COX15/CtaA family. Type 2 subfamily. As to quaternary structure, interacts with CtaB. It depends on heme b as a cofactor.

It is found in the cell membrane. It carries out the reaction Fe(II)-heme o + 2 A + H2O = Fe(II)-heme a + 2 AH2. It functions in the pathway porphyrin-containing compound metabolism; heme A biosynthesis; heme A from heme O: step 1/1. Catalyzes the conversion of heme O to heme A by two successive hydroxylations of the methyl group at C8. The first hydroxylation forms heme I, the second hydroxylation results in an unstable dihydroxymethyl group, which spontaneously dehydrates, resulting in the formyl group of heme A. This Erythrobacter litoralis (strain HTCC2594) protein is Heme A synthase.